Consider the following 435-residue polypeptide: Galactose/lactose metabolism regulatory protein GAL80 (435 aa).

N-acetylmethionine is present on M1.

The protein to K.lactis GAL80. Monomer.

Its function is as follows. This protein is a negative regulator for the gene expression of the lactose/galactose metabolic genes. It binds to GAL4 and so blocks transcriptional activation by it, in the absence of an inducing sugar. The chain is Galactose/lactose metabolism regulatory protein GAL80 (GAL80) from Saccharomyces cerevisiae (strain ATCC 204508 / S288c) (Baker's yeast).